An 860-amino-acid polypeptide reads, in one-letter code: DNA mismatch repair protein MutS (860 aa).

607–614 (GPNMSGKS) provides a ligand contact to ATP.

The protein belongs to the DNA mismatch repair MutS family.

This protein is involved in the repair of mismatches in DNA. It is possible that it carries out the mismatch recognition step. This protein has a weak ATPase activity. The chain is DNA mismatch repair protein MutS from Listeria monocytogenes serotype 4a (strain HCC23).